The primary structure comprises 82 residues: Photosystem I iron-sulfur center (82 aa).

2 4Fe-4S ferredoxin-type domains span residues 2–31 (AHSVKIYDTCIGCTQCVRACPTDVLEMVPW) and 40–69 (IAAAPRTEDCVGCKRCETACPTDFLSIRVY). [4Fe-4S] cluster contacts are provided by Cys-11, Cys-14, Cys-17, Cys-21, Cys-49, Cys-52, Cys-55, and Cys-59.

As to quaternary structure, the cyanobacterial PSI reaction center is composed of one copy each of PsaA,B,C,D,E,F,I,J,K,L,M and X, and forms trimeric complexes. The cofactor is [4Fe-4S] cluster.

It is found in the cellular thylakoid membrane. It carries out the reaction reduced [plastocyanin] + hnu + oxidized [2Fe-2S]-[ferredoxin] = oxidized [plastocyanin] + reduced [2Fe-2S]-[ferredoxin]. Functionally, apoprotein for the two 4Fe-4S centers FA and FB of photosystem I (PSI); essential for photochemical activity. FB is the terminal electron acceptor of PSI, donating electrons to ferredoxin. The C-terminus interacts with PsaA/B/D and helps assemble the protein into the PSI complex. Required for binding of PsaD and PsaE to PSI. PSI is a plastocyanin/cytochrome c6-ferredoxin oxidoreductase, converting photonic excitation into a charge separation, which transfers an electron from the donor P700 chlorophyll pair to the spectroscopically characterized acceptors A0, A1, FX, FA and FB in turn. The polypeptide is Photosystem I iron-sulfur center (Synechococcus sp. (strain JA-2-3B'a(2-13)) (Cyanobacteria bacterium Yellowstone B-Prime)).